The following is a 549-amino-acid chain: Glucose-6-phosphate isomerase (549 aa).

Glu355 acts as the Proton donor in catalysis. Residues His386 and Lys514 contribute to the active site.

It belongs to the GPI family.

The protein localises to the cytoplasm. It catalyses the reaction alpha-D-glucose 6-phosphate = beta-D-fructose 6-phosphate. It functions in the pathway carbohydrate biosynthesis; gluconeogenesis. It participates in carbohydrate degradation; glycolysis; D-glyceraldehyde 3-phosphate and glycerone phosphate from D-glucose: step 2/4. Functionally, catalyzes the reversible isomerization of glucose-6-phosphate to fructose-6-phosphate. This chain is Glucose-6-phosphate isomerase, found in Sodalis glossinidius (strain morsitans).